Consider the following 72-residue polypeptide: Translation initiation factor IF-1 (72 aa).

In terms of domain architecture, S1-like spans 1-72; it reads MSKDDVIQMQ…SRARIVFRAK (72 aa).

The protein belongs to the IF-1 family. As to quaternary structure, component of the 30S ribosomal translation pre-initiation complex which assembles on the 30S ribosome in the order IF-2 and IF-3, IF-1 and N-formylmethionyl-tRNA(fMet); mRNA recruitment can occur at any time during PIC assembly.

It is found in the cytoplasm. One of the essential components for the initiation of protein synthesis. Stabilizes the binding of IF-2 and IF-3 on the 30S subunit to which N-formylmethionyl-tRNA(fMet) subsequently binds. Helps modulate mRNA selection, yielding the 30S pre-initiation complex (PIC). Upon addition of the 50S ribosomal subunit IF-1, IF-2 and IF-3 are released leaving the mature 70S translation initiation complex. This is Translation initiation factor IF-1 from Albidiferax ferrireducens (strain ATCC BAA-621 / DSM 15236 / T118) (Rhodoferax ferrireducens).